A 105-amino-acid chain; its full sequence is U-scoloptoxin(16)-Sm4a (105 aa).

Residues 1–22 form the signal peptide; it reads MWALTVFVTILAAAIPITGVTG.

Belongs to the scoloptoxin-16 family. Post-translationally, contains 4 disulfide bonds. Expressed by the venom gland.

The protein localises to the secreted. The chain is U-scoloptoxin(16)-Sm4a from Scolopendra morsitans (Tanzanian blue ringleg centipede).